Reading from the N-terminus, the 370-residue chain is Mitochondrial carrier protein SCaMC-3L (370 aa).

Solcar repeat units lie at residues 90–176 (EALW…CKNY), 184–269 (PPFQ…LQCF), and 280–367 (PSGL…MKKT). 6 helical membrane-spanning segments follow: residues 96-113 (LLSG…TAPL), 151-170 (GNGI…FSVF), 194-207 (SLAV…INPM), 245-263 (YLPN…LAVY), 282-306 (GLVS…LTLV), and 342-361 (GMTP…YVVY).

The protein belongs to the mitochondrial carrier (TC 2.A.29) family.

The protein localises to the mitochondrion inner membrane. It carries out the reaction Mg(2+)(out) + phosphate(in) + ATP(out) = Mg(2+)(in) + phosphate(out) + ATP(in). It catalyses the reaction ADP(out) + phosphate(in) + H(+)(out) = ADP(in) + phosphate(out) + H(+)(in). Calcium-independent ATP-Mg/Pi exchanger that catalyzes the electroneutral exchange of Mg-ATP or free ADP against an hydrogenphosphate and participates in the net transport of adenine nucleotides across the mitochondria inner membrane. In Homo sapiens (Human), this protein is Mitochondrial carrier protein SCaMC-3L.